We begin with the raw amino-acid sequence, 492 residues long: Lysine--tRNA ligase (492 aa).

The Mg(2+) site is built by Glu403 and Glu410.

The protein belongs to the class-II aminoacyl-tRNA synthetase family. Homodimer. Requires Mg(2+) as cofactor.

The protein localises to the cytoplasm. It carries out the reaction tRNA(Lys) + L-lysine + ATP = L-lysyl-tRNA(Lys) + AMP + diphosphate. In Mycoplasmoides gallisepticum (strain R(low / passage 15 / clone 2)) (Mycoplasma gallisepticum), this protein is Lysine--tRNA ligase.